The following is a 365-amino-acid chain: TD and POZ domain-containing protein 1 (365 aa).

One can recognise an MATH domain in the interval 19-149 (KFCYKWTISN…EDQLTICCKV (131 aa)). The BTB domain occupies 188 to 250 (TDCCLLVAGH…EMMGFIYTGK (63 aa)).

This sequence belongs to the Tdpoz family.

The protein is TD and POZ domain-containing protein 1 of Mus musculus (Mouse).